The chain runs to 152 residues: Ribosomal RNA large subunit methyltransferase H (152 aa).

S-adenosyl-L-methionine is bound by residues L70, G101, and 120–125 (LSDLTF).

Belongs to the RNA methyltransferase RlmH family. Homodimer.

It localises to the cytoplasm. It carries out the reaction pseudouridine(1915) in 23S rRNA + S-adenosyl-L-methionine = N(3)-methylpseudouridine(1915) in 23S rRNA + S-adenosyl-L-homocysteine + H(+). Its function is as follows. Specifically methylates the pseudouridine at position 1915 (m3Psi1915) in 23S rRNA. This is Ribosomal RNA large subunit methyltransferase H from Pseudothermotoga lettingae (strain ATCC BAA-301 / DSM 14385 / NBRC 107922 / TMO) (Thermotoga lettingae).